We begin with the raw amino-acid sequence, 912 residues long: Receptor protein kinase WSS1 (912 aa).

Residues 1–27 (MGRDARRLPLLPFLLLLLAAAAGVAES) form the signal peptide. At 28-477 (ATDAEAIHDL…AGGGKSKPNT (450 aa)) the chain is on the extracellular side. LRR repeat units follow at residues 64–88 (AGKVTELNLADRGLSGTLPDSLSSL), 89–111 (TSLTALQLQGNALTGAVPSLARM), and 112–134 (GSLARLALDGNAFTSLPPDFLHG). Residues asparagine 159, asparagine 170, asparagine 196, asparagine 256, asparagine 286, asparagine 371, asparagine 376, asparagine 387, and asparagine 400 are each glycosylated (N-linked (GlcNAc...) asparagine). LRR repeat units follow at residues 184–208 (LVSLRNLRLSYNNLTGGLPPELSSL), 235–261 (MKSLKLLWIQSNKFTGPIPDLNGTQLE), 281–303 (LMSLKNVSLSNNNFQGPKPAFAA), 364–388 (SSDVSMINLSRKNLSGRISPALANL), 389–411 (TRLARLDLSNNNLTGVIPDVLTT), and 413–438 (PSLTVLNVANNRLTGEVPKFKPSVNV). The disordered stretch occupies residues 448-472 (SSGSSGGGGGSDGDSSSSDSAGGGK). Residues 478-498 (GMIIGIIVAVIILFACIALLV) form a helical membrane-spanning segment. The Cytoplasmic segment spans residues 499–912 (HHRKKKNVEK…SFNVPRKYNG (414 aa)). A Protein kinase domain is found at 580-859 (FSEDCILGRG…HCVNRLSSLV (280 aa)). Residues 586–594 (LGRGGFGVV) and lysine 607 each bind ATP. Aspartate 708 serves as the catalytic Proton acceptor.

This sequence belongs to the protein kinase superfamily. Ser/Thr protein kinase family. Mn(2+) serves as cofactor. Expressed in young and mature leaves.

It is found in the cell membrane. It carries out the reaction L-seryl-[protein] + ATP = O-phospho-L-seryl-[protein] + ADP + H(+). It catalyses the reaction L-threonyl-[protein] + ATP = O-phospho-L-threonyl-[protein] + ADP + H(+). In terms of biological role, transmembrane kinase receptor involved in the regulation of reactive oxygen species (ROS) homeostasis, chloroplast development and leaf senescence. The chain is Receptor protein kinase WSS1 from Oryza sativa subsp. japonica (Rice).